Here is a 212-residue protein sequence, read N- to C-terminus: Pyrrolidone-carboxylate peptidase (212 aa).

Catalysis depends on residues E78, C141, and H165.

This sequence belongs to the peptidase C15 family. In terms of assembly, homotetramer.

It localises to the cytoplasm. The catalysed reaction is Release of an N-terminal pyroglutamyl group from a polypeptide, the second amino acid generally not being Pro.. In terms of biological role, removes 5-oxoproline from various penultimate amino acid residues except L-proline. This chain is Pyrrolidone-carboxylate peptidase, found in Staphylococcus aureus (strain Mu3 / ATCC 700698).